The following is a 61-amino-acid chain: MAKTSMVAKQQKKQKFQVREYTRCERCGRPHSVYRKFKLCRICFRELAYKGQIPGVRKASW.

Residues Cys-24, Cys-27, Cys-40, and Cys-43 each coordinate Zn(2+).

Belongs to the universal ribosomal protein uS14 family. Zinc-binding uS14 subfamily. In terms of assembly, part of the 30S ribosomal subunit. Contacts proteins S3 and S10. Requires Zn(2+) as cofactor.

Binds 16S rRNA, required for the assembly of 30S particles and may also be responsible for determining the conformation of the 16S rRNA at the A site. The sequence is that of Small ribosomal subunit protein uS14B from Staphylococcus saprophyticus subsp. saprophyticus (strain ATCC 15305 / DSM 20229 / NCIMB 8711 / NCTC 7292 / S-41).